The primary structure comprises 794 residues: Zinc finger protein 148 (794 aa).

Lys-6 is covalently cross-linked (Glycyl lysine isopeptide (Lys-Gly) (interchain with G-Cter in SUMO2)). Ser-51 carries the post-translational modification Phosphoserine. Glycyl lysine isopeptide (Lys-Gly) (interchain with G-Cter in SUMO2) cross-links involve residues Lys-88, Lys-115, and Lys-132. The segment at 171–193 (HVCEHCNAAFRTNYHLQRHVFIH) adopts a C2H2-type 1 zinc-finger fold. Thr-194 is modified (phosphothreonine). 2 C2H2-type zinc fingers span residues 199–221 (FQCSQCDMRFIQKYLLQRHEKIH) and 227–249 (FRCDECGMRFIQKYHMERHKRTH). Ser-250 carries the post-translational modification Phosphoserine. Residues 255–278 (YQCEYCLQYFSRTDRVLKHKRMCH) form a C2H2-type 4 zinc finger. Lys-291 is covalently cross-linked (Glycyl lysine isopeptide (Lys-Gly) (interchain with G-Cter in SUMO2)). The disordered stretch occupies residues 298–336 (EEDSGFSTSPKDNSLPKKKRQKTEKKSSGMDKESVLDKS). Ser-301 and Ser-306 each carry phosphoserine. Lys-308 participates in a covalent cross-link: Glycyl lysine isopeptide (Lys-Gly) (interchain with G-Cter in SUMO2). Positions 321-336 (EKKSSGMDKESVLDKS) are enriched in basic and acidic residues. Residue Lys-356 forms a Glycyl lysine isopeptide (Lys-Gly) (interchain with G-Cter in SUMO1); alternate linkage. Lys-356 is covalently cross-linked (Glycyl lysine isopeptide (Lys-Gly) (interchain with G-Cter in SUMO2); alternate). A Glycyl lysine isopeptide (Lys-Gly) (interchain with G-Cter in SUMO2) cross-link involves residue Lys-402. The residue at position 412 (Ser-412) is a Phosphoserine. Glycyl lysine isopeptide (Lys-Gly) (interchain with G-Cter in SUMO2) cross-links involve residues Lys-421 and Lys-424. Residues 574-588 (NSSDVPEVTQSENVG) are compositionally biased toward polar residues. Positions 574–599 (NSSDVPEVTQSENVGSSSQASSSDKA) are disordered. Position 607 is an N6-acetyllysine (Lys-607). Ser-665 and Ser-784 each carry phosphoserine.

It belongs to the krueppel C2H2-type zinc-finger protein family. In terms of assembly, interacts with HNRNPDL. Interacts with the 5FMC complex; the interaction requires association with CHTOP. Interacts with CAVIN1. Sumoylated with SUMO2. Desumoylated by SENP3, resulting in the stimulation of transcription of its target genes. Strong expression detected in brain, lung, liver and kidney, with lower levels detected in spleen, skeletal muscle, testis and heart.

It is found in the nucleus. Involved in transcriptional regulation. Represses the transcription of a number of genes including gastrin, stromelysin and enolase. Binds to the G-rich box in the enhancer region of these genes. The protein is Zinc finger protein 148 (Znf148) of Mus musculus (Mouse).